The chain runs to 180 residues: MSRDYNCTTDDQLAWGIPSISHAWGLWALLGVVTVLLLISLAALLSQWTRGRRRNQEGQGPLSGRSAEEVPLYGNLHYLQTGRLSQEPRSEEQDPPSSGGLARGAEEAMCYTSLQLRPAQGRIPSSGNPIKYCEVVLDSEPKPQAPGPEPELYASVCAQTRRGRASFPDQAYANSQPAPS.

Residues 1 to 24 lie on the Extracellular side of the membrane; sequence MSRDYNCTTDDQLAWGIPSISHAW. A glycan (N-linked (GlcNAc...) asparagine) is linked at Asn6. The helical; Signal-anchor for type III membrane protein transmembrane segment at 25–45 threads the bilayer; that stretch reads GLWALLGVVTVLLLISLAALL. Residues 46 to 180 are Cytoplasmic-facing; that stretch reads SQWTRGRRRN…AYANSQPAPS (135 aa). Ser63 and Ser66 each carry phosphoserine. Position 73 is a phosphotyrosine (Tyr73). An interaction with GRB2 region spans residues 73–76; it reads YGNL. The interval 81–103 is disordered; the sequence is TGRLSQEPRSEEQDPPSSGGLAR. Residues Ser85 and Ser90 each carry the phosphoserine modification. Phosphotyrosine occurs at positions 111, 132, and 153. The tract at residues 130 to 135 is interaction with PTPN11; it reads IKYCEV. Residues 153–156 are interaction with CSK; it reads YASV. A Phosphoserine modification is found at Ser166. Residue Tyr172 is modified to Phosphotyrosine. An interaction with GRB2 region spans residues 172–175; that stretch reads YANS.

Homodimer; disulfide-linked. When phosphorylated, interacts with PTPN11/SHP2, GRB2 and CSK. Post-translationally, phosphorylated on tyrosines upon TCR activation; which leads to the recruitment of PTPN11, GRB2 and CSK. In terms of tissue distribution, expressed in thymus and spleen, with highest levels in immature thymocytes (at protein level).

The protein localises to the cell membrane. Its function is as follows. Negatively regulates T-cell antigen receptor (TCR)-mediated signaling. Involved in positive selection of T-cells. The sequence is that of Signaling threshold-regulating transmembrane adapter 1 (Sit1) from Mus musculus (Mouse).